A 441-amino-acid chain; its full sequence is Integral membrane protein GPR180 (441 aa).

The N-terminal stretch at 1-23 (MGGLRLLAVALTCSCWWPQGGQG) is a signal peptide. An N-linked (GlcNAc...) asparagine glycan is attached at Asn111. A run of 7 helical transmembrane segments spans residues 174–194 (FFFL…QSLW), 206–226 (ILKV…ANYI), 250–270 (IASQ…WTIV), 285–305 (TPAS…LLLW), 322–342 (LAGL…GCGL), 361–381 (FAKG…IAVA), and 390–410 (LITV…YRLF).

The protein localises to the membrane. The polypeptide is Integral membrane protein GPR180 (Gpr180) (Mus musculus (Mouse)).